The chain runs to 145 residues: Superoxide dismutase [Mn/Fe] (145 aa).

Fe(3+) is bound by residues His-10 and His-64. Positions 10 and 64 each coordinate Mn(2+). Residues 126–145 (TSTANQDTPISEGKKPILGL) form a disordered region.

The protein belongs to the iron/manganese superoxide dismutase family. The cofactor is Mn(2+). Fe(3+) is required as a cofactor.

It carries out the reaction 2 superoxide + 2 H(+) = H2O2 + O2. Functionally, destroys superoxide anion radicals which are normally produced within the cells and which are toxic to biological systems. Catalyzes the dismutation of superoxide anion radicals into O2 and H2O2 by successive reduction and oxidation of the transition metal ion at the active site. The chain is Superoxide dismutase [Mn/Fe] (sodA) from Streptococcus oralis.